Here is a 206-residue protein sequence, read N- to C-terminus: Thiamine-phosphate synthase (206 aa).

4-amino-2-methyl-5-(diphosphooxymethyl)pyrimidine is bound by residues 33 to 37 (QMRFK) and N65. Mg(2+) is bound by residues D66 and D85. T104 lines the 4-amino-2-methyl-5-(diphosphooxymethyl)pyrimidine pocket. 2-[(2R,5Z)-2-carboxy-4-methylthiazol-5(2H)-ylidene]ethyl phosphate is bound at residue 130-132 (TAT). K133 is a binding site for 4-amino-2-methyl-5-(diphosphooxymethyl)pyrimidine. G166 is a 2-[(2R,5Z)-2-carboxy-4-methylthiazol-5(2H)-ylidene]ethyl phosphate binding site.

This sequence belongs to the thiamine-phosphate synthase family. It depends on Mg(2+) as a cofactor.

The enzyme catalyses 2-[(2R,5Z)-2-carboxy-4-methylthiazol-5(2H)-ylidene]ethyl phosphate + 4-amino-2-methyl-5-(diphosphooxymethyl)pyrimidine + 2 H(+) = thiamine phosphate + CO2 + diphosphate. It carries out the reaction 2-(2-carboxy-4-methylthiazol-5-yl)ethyl phosphate + 4-amino-2-methyl-5-(diphosphooxymethyl)pyrimidine + 2 H(+) = thiamine phosphate + CO2 + diphosphate. The catalysed reaction is 4-methyl-5-(2-phosphooxyethyl)-thiazole + 4-amino-2-methyl-5-(diphosphooxymethyl)pyrimidine + H(+) = thiamine phosphate + diphosphate. The protein operates within cofactor biosynthesis; thiamine diphosphate biosynthesis; thiamine phosphate from 4-amino-2-methyl-5-diphosphomethylpyrimidine and 4-methyl-5-(2-phosphoethyl)-thiazole: step 1/1. Its function is as follows. Condenses 4-methyl-5-(beta-hydroxyethyl)thiazole monophosphate (THZ-P) and 2-methyl-4-amino-5-hydroxymethyl pyrimidine pyrophosphate (HMP-PP) to form thiamine monophosphate (TMP). In Flavobacterium psychrophilum (strain ATCC 49511 / DSM 21280 / CIP 103535 / JIP02/86), this protein is Thiamine-phosphate synthase.